We begin with the raw amino-acid sequence, 87 residues long: Selenoprotein W (87 aa).

The segment at residues 10 to 13 is a cross-link (cysteinyl-selenocysteine (Cys-Sec); redox-active); the sequence is CGAU. A non-standard amino acid (selenocysteine) is located at residue U13. Residue C37 is modified to S-glutathionyl cysteine.

The protein belongs to the SelWTH family. Selenoprotein W subfamily. Interacts with DPYSL2, PRDX1, YWHAB, YWHAG, HSP70 and HSP90. In terms of tissue distribution, detected in muscle, heart, tongue, brain, lung, spleen, kidney and liver. Highest levels expressed in muscle and heart whereas lowest levels detected in liver (at protein level).

It is found in the cytoplasm. Its function is as follows. Plays a role as a glutathione (GSH)-dependent antioxidant. May be involved in a redox-related process. May play a role in the myopathies of selenium deficiency. The polypeptide is Selenoprotein W (Ovis aries (Sheep)).